Here is a 322-residue protein sequence, read N- to C-terminus: CMP-sialic acid transporter 1 (322 aa).

Topologically, residues M1 to Q2 are cytoplasmic. Residues W3–L23 traverse the membrane as a helical segment. At S24–D33 the chain is on the lumenal side. A helical transmembrane segment spans residues Y34 to W54. Residues K55–Y75 are Cytoplasmic-facing. Residues L76–V96 form a helical membrane-spanning segment. Residues D97–T100 lie on the Lumenal side of the membrane. Residues Y101–L120 traverse the membrane as a helical segment. At K121–N126 the chain is on the cytoplasmic side. Residues L127 to V144 traverse the membrane as a helical segment. The Lumenal segment spans residues K145–S157. The helical transmembrane segment at A158 to V178 threads the bilayer. Residues Y179–L198 lie on the Cytoplasmic side of the membrane. The chain crosses the membrane as a helical span at residues Y199–F219. Over E220–S233 the chain is Lumenal. A helical membrane pass occupies residues I234–M254. The Cytoplasmic segment spans residues K255–K262. Residues V263–V283 form a helical membrane-spanning segment. The Lumenal portion of the chain corresponds to R284–T286.

It belongs to the nucleotide-sugar transporter family. CMP-Sialate:CMP antiporter (TC 2.A.7.12) subfamily. As to expression, expressed in roots, leaves and stalks.

It localises to the golgi apparatus membrane. Sugar transporter involved in the transport of CMP-sialic acid from the cytoplasm into the Golgi. May transport important nucleotide sugars such as CMP-Kdo (2-keto-3-deoxy-D-manno-octulosonic acid) in physiological conditions. This Oryza sativa subsp. japonica (Rice) protein is CMP-sialic acid transporter 1.